We begin with the raw amino-acid sequence, 249 residues long: 5'-nucleotidase SurE (249 aa).

Positions 8, 9, 39, and 91 each coordinate a divalent metal cation.

It belongs to the SurE nucleotidase family. It depends on a divalent metal cation as a cofactor.

The protein resides in the cytoplasm. The enzyme catalyses a ribonucleoside 5'-phosphate + H2O = a ribonucleoside + phosphate. Its function is as follows. Nucleotidase that shows phosphatase activity on nucleoside 5'-monophosphates. This Azotobacter vinelandii (strain DJ / ATCC BAA-1303) protein is 5'-nucleotidase SurE.